We begin with the raw amino-acid sequence, 172 residues long: Type VI secretion system sheath protein TssB1 (172 aa).

In terms of assembly, forms a heterodimer with TssC1. Heterodimers assemble to form the sheath of the T6SS machinery. Interacts with TagJ. Interacts with TssA1.

Its function is as follows. Core component of the H1 type VI (H1-T6SS) secretion system that plays a role in the release of toxins targeting both eukaryotic and prokaryotic species. Forms the sheath of the structure by assembling into tubules together with TssC1 resulting in the stacking of cogwheel-like structures showing predominantly a 12-fold symmetry. The sheath contracts to provide the energy needed for effector delivery. The sequence is that of Type VI secretion system sheath protein TssB1 from Pseudomonas aeruginosa (strain ATCC 15692 / DSM 22644 / CIP 104116 / JCM 14847 / LMG 12228 / 1C / PRS 101 / PAO1).